The following is a 466-amino-acid chain: MADHFDLIVLGGGPGGYVAAIRAAQLNLKVALVERVHLGGICLNWGCIPTKSLLRSAEVYHEMQNAEAYGLTSFKPDFDLDKIIARSREVATRLASGVKTLLRKNKVEVISGVGQLTGNQQMLVETTEGEEKILEAKDIIIATGARARQLPNVHSDGKHIWTYHHALKPPAMPKKLLVIGSGAIGIEFASFYADFGAEVSIVEHAPQILPMEDAEVSAYVAKAFKKRGIRILTQSALQNLTPDDEGVTAEIAGADGKVTKERFSHAIVAIGVVANVENIGLDKLGIKLDRGFIAVDGFGRTNVDHVWAIGDVAGAPCLAHKASHQGVIAAEAIAGCDHVHPLNTQNIPGCTYARPQVASVGLTEEKARQQGYNVKIGNFPFIANGKAIAQGATDGFVKTVFDADSGALLGAHMVGAEVTEMIQGYTVARTLETTEAEIMETIFPHPTLSEAMHESVLAAYGRALHF.

Residues 34 to 42 (ERVHLGGIC), Lys51, and Gly114 contribute to the FAD site. Cys42 and Cys47 are oxidised to a cystine. Residues 180–184 (GSGAI), Glu203, and 269–272 (AIGV) contribute to the NAD(+) site. FAD-binding residues include Asp311 and Ala319. Residue His445 is the Proton acceptor of the active site.

Belongs to the class-I pyridine nucleotide-disulfide oxidoreductase family. As to quaternary structure, homodimer. The cofactor is FAD.

It localises to the cytoplasm. It carries out the reaction N(6)-[(R)-dihydrolipoyl]-L-lysyl-[protein] + NAD(+) = N(6)-[(R)-lipoyl]-L-lysyl-[protein] + NADH + H(+). In terms of biological role, lipoamide dehydrogenase is a component of the alpha-ketoacid dehydrogenase complexes. The polypeptide is Dihydrolipoyl dehydrogenase (lpd) (Zymomonas mobilis subsp. mobilis (strain ATCC 31821 / ZM4 / CP4)).